A 489-amino-acid chain; its full sequence is 6-phosphogluconate dehydrogenase, decarboxylating 1 (489 aa).

Residues 9–14 and 32–34 each bind NADP(+); these read GLAVMG and NRT. Residue S50 is modified to Phosphoserine. NADP(+) is bound by residues 74 to 76 and N102; that span reads VKA. Substrate is bound by residues N102 and 128–130; that span reads SGG. K182 serves as the catalytic Proton acceptor. 185-186 is a substrate binding site; that stretch reads HN. Catalysis depends on E189, which acts as the Proton donor. The substrate site is built by Y190, K259, R286, R446, and H452.

Belongs to the 6-phosphogluconate dehydrogenase family. As to quaternary structure, homodimer.

The protein resides in the cytoplasm. The catalysed reaction is 6-phospho-D-gluconate + NADP(+) = D-ribulose 5-phosphate + CO2 + NADPH. It functions in the pathway carbohydrate degradation; pentose phosphate pathway; D-ribulose 5-phosphate from D-glucose 6-phosphate (oxidative stage): step 3/3. Its function is as follows. Catalyzes the oxidative decarboxylation of 6-phosphogluconate to ribulose 5-phosphate and CO(2), with concomitant reduction of NADP to NADPH. The sequence is that of 6-phosphogluconate dehydrogenase, decarboxylating 1 (GND1) from Saccharomyces cerevisiae (strain ATCC 204508 / S288c) (Baker's yeast).